The chain runs to 390 residues: 1-deoxy-D-xylulose 5-phosphate reductoisomerase (390 aa).

Residues Thr10, Gly11, Ser12, Ile13, Gly36, Arg37, Asn38, and Asn121 each contribute to the NADPH site. A 1-deoxy-D-xylulose 5-phosphate-binding site is contributed by Lys122. Position 123 (Glu123) interacts with NADPH. A Mn(2+)-binding site is contributed by Asp147. Residues Ser148, Glu149, Ser173, and His196 each contribute to the 1-deoxy-D-xylulose 5-phosphate site. A Mn(2+)-binding site is contributed by Glu149. NADPH is bound at residue Gly202. Ser209, Asn214, Lys215, and Glu218 together coordinate 1-deoxy-D-xylulose 5-phosphate. Glu218 contacts Mn(2+). Positions 367 to 390 (AASEHGRREAEKRVGARAHAPASR) are disordered. Basic and acidic residues predominate over residues 370 to 380 (EHGRREAEKRV).

It belongs to the DXR family. It depends on Mg(2+) as a cofactor. The cofactor is Mn(2+).

The enzyme catalyses 2-C-methyl-D-erythritol 4-phosphate + NADP(+) = 1-deoxy-D-xylulose 5-phosphate + NADPH + H(+). It participates in isoprenoid biosynthesis; isopentenyl diphosphate biosynthesis via DXP pathway; isopentenyl diphosphate from 1-deoxy-D-xylulose 5-phosphate: step 1/6. In terms of biological role, catalyzes the NADPH-dependent rearrangement and reduction of 1-deoxy-D-xylulose-5-phosphate (DXP) to 2-C-methyl-D-erythritol 4-phosphate (MEP). The sequence is that of 1-deoxy-D-xylulose 5-phosphate reductoisomerase from Anaeromyxobacter dehalogenans (strain 2CP-1 / ATCC BAA-258).